Reading from the N-terminus, the 421-residue chain is D-amino acid dehydrogenase (421 aa).

Position 3–17 (3–17) interacts with FAD; it reads VIVLGSGVIGVASAY.

Belongs to the DadA oxidoreductase family. The cofactor is FAD.

It catalyses the reaction a D-alpha-amino acid + A + H2O = a 2-oxocarboxylate + AH2 + NH4(+). Its pathway is amino-acid degradation; D-alanine degradation; NH(3) and pyruvate from D-alanine: step 1/1. Oxidative deamination of D-amino acids. The protein is D-amino acid dehydrogenase of Acinetobacter baumannii (strain AB307-0294).